Here is a 156-residue protein sequence, read N- to C-terminus: ATP synthase subunit b (156 aa).

Residues 3-23 form a helical membrane-spanning segment; sequence ITFTIFAQSLAFAALIWIVAT.

The protein belongs to the ATPase B chain family. In terms of assembly, F-type ATPases have 2 components, F(1) - the catalytic core - and F(0) - the membrane proton channel. F(1) has five subunits: alpha(3), beta(3), gamma(1), delta(1), epsilon(1). F(0) has three main subunits: a(1), b(2) and c(10-14). The alpha and beta chains form an alternating ring which encloses part of the gamma chain. F(1) is attached to F(0) by a central stalk formed by the gamma and epsilon chains, while a peripheral stalk is formed by the delta and b chains.

It localises to the cell inner membrane. In terms of biological role, f(1)F(0) ATP synthase produces ATP from ADP in the presence of a proton or sodium gradient. F-type ATPases consist of two structural domains, F(1) containing the extramembraneous catalytic core and F(0) containing the membrane proton channel, linked together by a central stalk and a peripheral stalk. During catalysis, ATP synthesis in the catalytic domain of F(1) is coupled via a rotary mechanism of the central stalk subunits to proton translocation. Its function is as follows. Component of the F(0) channel, it forms part of the peripheral stalk, linking F(1) to F(0). In Xylella fastidiosa (strain 9a5c), this protein is ATP synthase subunit b.